Reading from the N-terminus, the 154-residue chain is Protein X (154 aa).

The segment at 68-117 is mitochondrial targeting sequence; it reads PCALRFTSARCMATTVNAHQILPKVLHKRTLGLPAMSTTDLEAYFKDCLF.

Belongs to the orthohepadnavirus protein X family. May form homodimer. May interact with host CEBPA, CFLAR, CREB1, DDB1, E4F1, HBXIP, HSPD1/HSP60, NFKBIA, POLR2E and SMAD4. Interacts with host SMC5-SMC6 complex and induces its degradation. Interacts with host TRPC4AP; leading to prevent ubiquitination of TRPC4AP. Interacts with host PLSCR1; this interaction promotes ubiquitination and degradation of HBx and impairs HBx-mediated cell proliferation. In terms of processing, a fraction may be phosphorylated in insect cells and HepG2 cells, a human hepatoblastoma cell line. Phosphorylated in vitro by host protein kinase C or mitogen-activated protein kinase. N-acetylated in insect cells.

The protein localises to the host cytoplasm. Its subcellular location is the host nucleus. The protein resides in the host mitochondrion. Functionally, multifunctional protein that plays a role in silencing host antiviral defenses and promoting viral transcription. Does not seem to be essential for HBV infection. May be directly involved in development of cirrhosis and liver cancer (hepatocellular carcinoma). Most of cytosolic activities involve modulation of cytosolic calcium. The effect on apoptosis is controversial depending on the cell types in which the studies have been conducted. May induce apoptosis by localizing in mitochondria and causing loss of mitochondrial membrane potential. May also modulate apoptosis by binding host CFLAR, a key regulator of the death-inducing signaling complex (DISC). Promotes viral transcription by using the host E3 ubiquitin ligase DDB1 to target the SMC5-SMC6 complex to proteasomal degradation. This host complex would otherwise bind to viral episomal DNA, and prevents its transcription. Moderately stimulates transcription of many different viral and cellular transcription elements. Promoters and enhancers stimulated by HBx contain DNA binding sites for NF-kappa-B, AP-1, AP-2, c-EBP, ATF/CREB, or the calcium-activated factor NF-AT. In Hepatitis B virus genotype A3 (isolate Cameroon/CMR983/1994) (HBV-A), this protein is Protein X.